A 321-amino-acid polypeptide reads, in one-letter code: ATP-dependent 6-phosphofructokinase (321 aa).

G12 contacts ATP. ADP-binding positions include 22-26 (RGVVR) and 55-60 (RYSVSD). Residues 73–74 (RF) and 103–106 (GDGS) each bind ATP. Residue D104 coordinates Mg(2+). Residue 127 to 129 (TID) participates in substrate binding. The active-site Proton acceptor is D129. ADP is bound at residue R156. Substrate contacts are provided by residues R164 and 171–173 (MGR). Residues 187–189 (GCE), R213, and 215–217 (KRH) each bind ADP. Substrate contacts are provided by residues E224, R245, and 251-254 (HIQR).

Belongs to the phosphofructokinase type A (PFKA) family. ATP-dependent PFK group I subfamily. Prokaryotic clade 'B1' sub-subfamily. In terms of assembly, homotetramer. It depends on Mg(2+) as a cofactor.

The protein resides in the cytoplasm. It carries out the reaction beta-D-fructose 6-phosphate + ATP = beta-D-fructose 1,6-bisphosphate + ADP + H(+). It functions in the pathway carbohydrate degradation; glycolysis; D-glyceraldehyde 3-phosphate and glycerone phosphate from D-glucose: step 3/4. Allosterically activated by ADP and other diphosphonucleosides, and allosterically inhibited by phosphoenolpyruvate. In terms of biological role, catalyzes the phosphorylation of D-fructose 6-phosphate to fructose 1,6-bisphosphate by ATP, the first committing step of glycolysis. In Haemophilus influenzae (strain PittEE), this protein is ATP-dependent 6-phosphofructokinase.